We begin with the raw amino-acid sequence, 309 residues long: ATP synthase gamma chain (309 aa).

Belongs to the ATPase gamma chain family. In terms of assembly, F-type ATPases have 2 components, CF(1) - the catalytic core - and CF(0) - the membrane proton channel. CF(1) has five subunits: alpha(3), beta(3), gamma(1), delta(1), epsilon(1). CF(0) has three main subunits: a, b and c.

It is found in the cell membrane. Its function is as follows. Produces ATP from ADP in the presence of a proton gradient across the membrane. The gamma chain is believed to be important in regulating ATPase activity and the flow of protons through the CF(0) complex. The sequence is that of ATP synthase gamma chain from Mycolicibacterium vanbaalenii (strain DSM 7251 / JCM 13017 / BCRC 16820 / KCTC 9966 / NRRL B-24157 / PYR-1) (Mycobacterium vanbaalenii).